The primary structure comprises 71 residues: ATP synthase subunit c (71 aa).

2 consecutive transmembrane segments (helical) span residues 4-24 (IAAAIAIMGAAIGAGYGNGQV) and 47-67 (FIGVALVEAVPILGVVIALIL).

Belongs to the ATPase C chain family. F-type ATPases have 2 components, F(1) - the catalytic core - and F(0) - the membrane proton channel. F(1) has five subunits: alpha(3), beta(3), gamma(1), delta(1), epsilon(1). F(0) has three main subunits: a(1), b(2) and c(10-14). The alpha and beta chains form an alternating ring which encloses part of the gamma chain. F(1) is attached to F(0) by a central stalk formed by the gamma and epsilon chains, while a peripheral stalk is formed by the delta and b chains.

It is found in the cell membrane. Functionally, f(1)F(0) ATP synthase produces ATP from ADP in the presence of a proton or sodium gradient. F-type ATPases consist of two structural domains, F(1) containing the extramembraneous catalytic core and F(0) containing the membrane proton channel, linked together by a central stalk and a peripheral stalk. During catalysis, ATP synthesis in the catalytic domain of F(1) is coupled via a rotary mechanism of the central stalk subunits to proton translocation. Key component of the F(0) channel; it plays a direct role in translocation across the membrane. A homomeric c-ring of between 10-14 subunits forms the central stalk rotor element with the F(1) delta and epsilon subunits. In Enterococcus hirae (strain ATCC 9790 / DSM 20160 / JCM 8729 / LMG 6399 / NBRC 3181 / NCIMB 6459 / NCDO 1258 / NCTC 12367 / WDCM 00089 / R), this protein is ATP synthase subunit c.